Reading from the N-terminus, the 654-residue chain is RING finger protein 112 (654 aa).

The RING-type zinc-finger motif lies at 80 to 121 (CSICLERLREPISLDCGHDFCIRCFSTHRIPGCELPCCPECR). Residues 154-654 (AVRAERLLLV…GDREPLLQEE (501 aa)) form an interaction with ZBTB16 region. The 232-residue stretch at 189–420 (DTPVCLLAVL…YILDVLSTAP (232 aa)) folds into the GB1/RHD3-type G domain. 340–341 (RD) provides a ligand contact to GTP. 2 helical membrane-spanning segments follow: residues 570–590 (LAAVGGAVGAGLMGLAGGVVG) and 603–623 (GMVAAGAAVGATGAAVVGGGV).

Belongs to the TRAFAC class dynamin-like GTPase superfamily. GB1/RHD3 GTPase family. GB1 subfamily. In terms of assembly, self-associates. Interacts with SP1 in an oxidative stress-regulated manner. Interacts with SIGMAR1 in an oxidative stress-regulated manner. Interacts with ZBTB16 (via C2H2-type zinc finger domains 1 and 2). Auto-ubiquitinated. In terms of tissue distribution, expressed in most of the brain areas, including cortex, striatum, hippocampus, thalamus, and cerebellum (at protein level). Expressed in lateral amygdaloid nucleus, and ventromedial hypothalamus. Also expressed strongly in the marginal zone of brain vesicles, optic stalk, and cartilage primordium.

The protein localises to the membrane. Its subcellular location is the cytoplasm. It localises to the nucleus. It is found in the nuclear body. The protein resides in the nucleoplasm. The protein localises to the endosome. Its subcellular location is the cytoplasmic vesicle. It localises to the secretory vesicle. It is found in the synaptic vesicle. The protein resides in the postsynaptic density. The protein localises to the perikaryon. Its subcellular location is the cell projection. It localises to the neuron projection. It carries out the reaction S-ubiquitinyl-[E2 ubiquitin-conjugating enzyme]-L-cysteine + [acceptor protein]-L-lysine = [E2 ubiquitin-conjugating enzyme]-L-cysteine + N(6)-ubiquitinyl-[acceptor protein]-L-lysine.. Its pathway is protein modification; protein ubiquitination. E3 ubiquitin-protein ligase that plays an important role in neuronal differentiation, including neurogenesis and gliogenesis, during brain development. During embryonic development initiates neuronal differentiation by inducing cell cycle arrest at the G0/G1 phase through up-regulation of cell-cycle regulatory proteins. Plays a role not only in the fetal period during the development of the nervous system, but also in the adult brain, where it is involved in the maintenance of neural functions and protection of the nervous tissue cells from oxidative stress-induced damage. Exhibits GTPase and E3 ubiquitin-protein ligase activities. Regulates dendritic spine density and synaptic neurotransmission; its ability to hydrolyze GTP is involved in the maintenance of dendritic spine density. In Mus musculus (Mouse), this protein is RING finger protein 112 (Rnf112).